The chain runs to 306 residues: Elongation factor Ts (306 aa).

Positions 80–83 (TDFV) are involved in Mg(2+) ion dislocation from EF-Tu.

It belongs to the EF-Ts family.

It localises to the cytoplasm. Its function is as follows. Associates with the EF-Tu.GDP complex and induces the exchange of GDP to GTP. It remains bound to the aminoacyl-tRNA.EF-Tu.GTP complex up to the GTP hydrolysis stage on the ribosome. The protein is Elongation factor Ts of Clostridium kluyveri (strain NBRC 12016).